The sequence spans 92 residues: C-C motif chemokine 3 (92 aa).

The signal sequence occupies residues 1–23 (MKVSTTALAVLLCTMTLCNQVFS). 2 disulfides stabilise this stretch: C34–C57 and C35–C73.

It belongs to the intercrine beta (chemokine CC) family. As to quaternary structure, self-associates. Also heterodimer of MIP-1-alpha(4-69) and MIP-1-beta(3-69). Interacts with CCR1. In terms of tissue distribution, expressed in lung, spleen, and pancreas.

The protein localises to the secreted. Functionally, monokine with inflammatory and chemokinetic properties. Binds to CCR1, CCR4 and CCR5. One of the major HIV-suppressive factors produced by CD8+ T-cells. Recombinant MIP-1-alpha induces a dose-dependent inhibition of different strains of HIV-1, HIV-2, and simian immunodeficiency virus (SIV). The protein is C-C motif chemokine 3 (Ccl3) of Mus musculus (Mouse).